Consider the following 125-residue polypeptide: UPF0251 protein DSY3441 (125 aa).

The protein belongs to the UPF0251 family.

The polypeptide is UPF0251 protein DSY3441 (Desulfitobacterium hafniense (strain Y51)).